The following is a 237-amino-acid chain: Orotate phosphoribosyltransferase (237 aa).

A 5-phospho-alpha-D-ribose 1-diphosphate-binding site is contributed by lysine 29. 37–38 (FF) is a binding site for orotate. 5-phospho-alpha-D-ribose 1-diphosphate contacts are provided by residues 79 to 80 (YK), arginine 105, lysine 106, lysine 109, histidine 111, and 130 to 138 (DDVMSAGTA). Serine 134 and arginine 162 together coordinate orotate.

Belongs to the purine/pyrimidine phosphoribosyltransferase family. PyrE subfamily. As to quaternary structure, homodimer. It depends on Mg(2+) as a cofactor.

The enzyme catalyses orotidine 5'-phosphate + diphosphate = orotate + 5-phospho-alpha-D-ribose 1-diphosphate. It participates in pyrimidine metabolism; UMP biosynthesis via de novo pathway; UMP from orotate: step 1/2. Its function is as follows. Catalyzes the transfer of a ribosyl phosphate group from 5-phosphoribose 1-diphosphate to orotate, leading to the formation of orotidine monophosphate (OMP). This is Orotate phosphoribosyltransferase from Polaromonas naphthalenivorans (strain CJ2).